Consider the following 255-residue polypeptide: Aliphatic sulfonates import ATP-binding protein SsuB (255 aa).

The ABC transporter domain maps to 12 to 233 (LLLNAVSKHY…RLGSVRLAEL (222 aa)). 44 to 51 (GRSGGGKS) is an ATP binding site.

Belongs to the ABC transporter superfamily. Aliphatic sulfonates importer (TC 3.A.1.17.2) family. In terms of assembly, the complex is composed of two ATP-binding proteins (SsuB), two transmembrane proteins (SsuC) and a solute-binding protein (SsuA).

The protein resides in the cell inner membrane. The catalysed reaction is ATP + H2O + aliphatic sulfonate-[sulfonate-binding protein]Side 1 = ADP + phosphate + aliphatic sulfonateSide 2 + [sulfonate-binding protein]Side 1.. In terms of biological role, part of the ABC transporter complex SsuABC involved in aliphatic sulfonates import. Responsible for energy coupling to the transport system. This chain is Aliphatic sulfonates import ATP-binding protein SsuB, found in Escherichia coli O1:K1 / APEC.